Here is a 98-residue protein sequence, read N- to C-terminus: Co-chaperonin GroES (98 aa).

It belongs to the GroES chaperonin family. As to quaternary structure, heptamer of 7 subunits arranged in a ring. Interacts with the chaperonin GroEL.

The protein localises to the cytoplasm. In terms of biological role, together with the chaperonin GroEL, plays an essential role in assisting protein folding. The GroEL-GroES system forms a nano-cage that allows encapsulation of the non-native substrate proteins and provides a physical environment optimized to promote and accelerate protein folding. GroES binds to the apical surface of the GroEL ring, thereby capping the opening of the GroEL channel. In Neorickettsia sennetsu (strain ATCC VR-367 / Miyayama) (Ehrlichia sennetsu), this protein is Co-chaperonin GroES.